Consider the following 399-residue polypeptide: Endonuclease III homolog 1 (399 aa).

A mitochondrion-targeting transit peptide spans 1–26; that stretch reads MQKISKYSSMAILRKRPLVKTETGPE. A Bipartite nuclear localization signal motif is present at residues 14 to 37; it reads RKRPLVKTETGPESELLPEKRTKI. Residue Lys-194 forms a Glycyl lysine isopeptide (Lys-Gly) (interchain with G-Cter in SUMO) linkage. Residues 223 to 247 enclose the HhH domain; it reads FSSDVPATINELLGLPGVGPKMAYL. The active-site Nucleophile; for N-glycosylase activity is the Lys-243.

The protein belongs to the Nth/MutY family. Post-translationally, monosumoylated. Sumoylation is associated with targeting of NTG1 to nuclei containing oxidative DNA damage.

Its subcellular location is the nucleus. The protein resides in the mitochondrion. It catalyses the reaction 2'-deoxyribonucleotide-(2'-deoxyribose 5'-phosphate)-2'-deoxyribonucleotide-DNA = a 3'-end 2'-deoxyribonucleotide-(2,3-dehydro-2,3-deoxyribose 5'-phosphate)-DNA + a 5'-end 5'-phospho-2'-deoxyribonucleoside-DNA + H(+). Bifunctional DNA N-glycosylase with associated apurinic/apyrimidinic (AP) lyase function that catalyzes the first step in base excision repair (BER), the primary repair pathway for the repair of oxidative DNA damage. The DNA N-glycosylase activity releases the damaged DNA base from DNA by cleaving the N-glycosidic bond, leaving an AP site. The AP-lyase activity cleaves the phosphodiester bond 3' to the AP site by a beta-elimination. Primarily recognizes and repairs oxidative base damage of pyrimidines, but also purine-derived lesions, alkylation damage and cytosine photoproducts generated by UV irradiation as well as abasic sites. Also has 8-oxoguanine DNA glycosylase activity. The AP lyase can incise AP sites opposite all four bases. May also play a role in the regulation of mtDNA copy number by introducing a double-stranded break (DSB) at the mtDNA replication origin ori5, initiating the rolling-circle mtDNA replication. This chain is Endonuclease III homolog 1, found in Saccharomyces cerevisiae (strain ATCC 204508 / S288c) (Baker's yeast).